Here is a 351-residue protein sequence, read N- to C-terminus: MTDTWWLNPCKAIDAQAYEQALARQQQLTKPAGSLGQLEALAVQLAGLQGQVKPSVDSLWIAIFAGDHGVVAEGVSAFPQEVTGQMLQNFVTGGAAISVLARQLGAQLEVVDLGTVTPSLDLPGVRHLNIGAGTANFVNGPAMTEAQGQLALQAGRDSAWRALANGAQLFIGGEMGIGNTTAASALACALLDCPVSDLTGPGTGLNAQGVSHKVAVIERALALHAGQRGNALQTLFNLGGFEIAALVGAYLGCAQEGIVVLVDGFICTVAALVATRVNPACREWLVFGHRGAEPGHRHVLQRLDAQPLLELGLRLGEGSGAALAVPLLRLACALHGQMATFAEAAVADRPA.

The active-site Proton acceptor is Glu317.

It belongs to the CobT family.

It catalyses the reaction 5,6-dimethylbenzimidazole + nicotinate beta-D-ribonucleotide = alpha-ribazole 5'-phosphate + nicotinate + H(+). Its pathway is nucleoside biosynthesis; alpha-ribazole biosynthesis; alpha-ribazole from 5,6-dimethylbenzimidazole: step 1/2. In terms of biological role, catalyzes the synthesis of alpha-ribazole-5'-phosphate from nicotinate mononucleotide (NAMN) and 5,6-dimethylbenzimidazole (DMB). In Pseudomonas fluorescens (strain SBW25), this protein is Nicotinate-nucleotide--dimethylbenzimidazole phosphoribosyltransferase.